The sequence spans 45 residues: Photosystem II reaction center protein K (45 aa).

The propeptide occupies 1–8; it reads MEAALLLA. A helical membrane pass occupies residues 24–44; sequence LPVIPVFFLLLAFVWQAAVGF.

The protein belongs to the PsbK family. PSII is composed of 1 copy each of membrane proteins PsbA, PsbB, PsbC, PsbD, PsbE, PsbF, PsbH, PsbI, PsbJ, PsbK, PsbL, PsbM, PsbT, PsbX, PsbY, PsbZ, Psb30/Ycf12, peripheral proteins PsbO, CyanoQ (PsbQ), PsbU, PsbV and a large number of cofactors. It forms dimeric complexes.

The protein localises to the cellular thylakoid membrane. Functionally, one of the components of the core complex of photosystem II (PSII). PSII is a light-driven water:plastoquinone oxidoreductase that uses light energy to abstract electrons from H(2)O, generating O(2) and a proton gradient subsequently used for ATP formation. It consists of a core antenna complex that captures photons, and an electron transfer chain that converts photonic excitation into a charge separation. This is Photosystem II reaction center protein K from Synechococcus elongatus (strain ATCC 33912 / PCC 7942 / FACHB-805) (Anacystis nidulans R2).